The sequence spans 536 residues: Proto-oncogene tyrosine-protein kinase Yrk (536 aa).

The N-myristoyl glycine moiety is linked to residue Gly2. 2 S-palmitoyl cysteine lipidation sites follow: Cys3 and Cys6. The tract at residues 10–36 is disordered; that stretch reads ISGKGQGGSGTGTPAHPPSQYDPDPTQ. An SH3 domain is found at 81–142; it reads GGVTLFIALY…PSNYVAPVDS (62 aa). The region spanning 148–245 is the SH2 domain; it reads WYFGKIGRKD…GLCCRLAVPC (98 aa). The Protein kinase domain maps to 270–523; the sequence is LQLLQKLGNG…YLQSFLEDYF (254 aa). ATP-binding positions include 276-284 and Lys298; that span reads LGNGQFGEV. Asp389 functions as the Proton acceptor in the catalytic mechanism. Tyr419 is subject to Phosphotyrosine; by autocatalysis. Phosphotyrosine is present on Tyr530.

Belongs to the protein kinase superfamily. Tyr protein kinase family. SRC subfamily. Phosphorylated. In terms of tissue distribution, there are elevated levels of this protein in neural and hematopoietic tissues.

It catalyses the reaction L-tyrosyl-[protein] + ATP = O-phospho-L-tyrosyl-[protein] + ADP + H(+). In terms of biological role, may participate in signaling pathways. The protein is Proto-oncogene tyrosine-protein kinase Yrk (YRK) of Gallus gallus (Chicken).